Reading from the N-terminus, the 296-residue chain is Transmembrane protein 156 (296 aa).

Topologically, residues 1-4 (MTKT) are cytoplasmic. The chain crosses the membrane as a helical span at residues 5 to 25 (ALLKLFVAIVITFILILPEYF). Over 26 to 211 (KTPKERTLEL…EMDIKNITCS (186 aa)) the chain is Extracellular. N-linked (GlcNAc...) asparagine glycans are attached at residues Asn-45 and Asn-156. The helical transmembrane segment at 212–232 (MKITWYILVLLVFIFLIILTI) threads the bilayer. At 233–296 (RKILEGQRRV…QEVLPPIPEL (64 aa)) the chain is on the cytoplasmic side.

It localises to the membrane. This is Transmembrane protein 156 (TMEM156) from Homo sapiens (Human).